Consider the following 318-residue polypeptide: tRNA U34 carboxymethyltransferase (318 aa).

Residues K88, W102, K107, G126, M192, Y196, and R311 each coordinate carboxy-S-adenosyl-L-methionine.

This sequence belongs to the class I-like SAM-binding methyltransferase superfamily. CmoB family. As to quaternary structure, homotetramer.

It catalyses the reaction carboxy-S-adenosyl-L-methionine + 5-hydroxyuridine(34) in tRNA = 5-carboxymethoxyuridine(34) in tRNA + S-adenosyl-L-homocysteine + H(+). Its function is as follows. Catalyzes carboxymethyl transfer from carboxy-S-adenosyl-L-methionine (Cx-SAM) to 5-hydroxyuridine (ho5U) to form 5-carboxymethoxyuridine (cmo5U) at position 34 in tRNAs. This is tRNA U34 carboxymethyltransferase from Pseudomonas fluorescens (strain SBW25).